The chain runs to 282 residues: NADPH-dependent 7-cyano-7-deazaguanine reductase (282 aa).

I88–S90 contacts substrate. S90–K91 lines the NADPH pocket. The active-site Thioimide intermediate is C190. D197 (proton donor) is an active-site residue. H229–E230 is a binding site for substrate. R258–G259 is a binding site for NADPH.

Belongs to the GTP cyclohydrolase I family. QueF type 2 subfamily. As to quaternary structure, homodimer.

The protein localises to the cytoplasm. It catalyses the reaction 7-aminomethyl-7-carbaguanine + 2 NADP(+) = 7-cyano-7-deazaguanine + 2 NADPH + 3 H(+). It functions in the pathway tRNA modification; tRNA-queuosine biosynthesis. In terms of biological role, catalyzes the NADPH-dependent reduction of 7-cyano-7-deazaguanine (preQ0) to 7-aminomethyl-7-deazaguanine (preQ1). This chain is NADPH-dependent 7-cyano-7-deazaguanine reductase, found in Shigella dysenteriae serotype 1 (strain Sd197).